A 60-amino-acid chain; its full sequence is Large ribosomal subunit protein bL32 (60 aa).

Residues 1-43 form a disordered region; sequence MAVQQNRKTRSRRGMRRSHDALTGKTLSVDSTTGEKHLRHHVT. Positions 7–16 are enriched in basic residues; it reads RKTRSRRGMR.

It belongs to the bacterial ribosomal protein bL32 family.

This chain is Large ribosomal subunit protein bL32, found in Saccharophagus degradans (strain 2-40 / ATCC 43961 / DSM 17024).